Here is a 360-residue protein sequence, read N- to C-terminus: Phosphoserine aminotransferase (360 aa).

L-glutamate is bound at residue R42. Pyridoxal 5'-phosphate is bound by residues 76–77 (AR), W102, T153, D172, and Q195. Residue K196 is modified to N6-(pyridoxal phosphate)lysine. Position 237–238 (237–238 (NT)) interacts with pyridoxal 5'-phosphate.

This sequence belongs to the class-V pyridoxal-phosphate-dependent aminotransferase family. SerC subfamily. As to quaternary structure, homodimer. Pyridoxal 5'-phosphate serves as cofactor.

Its subcellular location is the cytoplasm. It carries out the reaction O-phospho-L-serine + 2-oxoglutarate = 3-phosphooxypyruvate + L-glutamate. The enzyme catalyses 4-(phosphooxy)-L-threonine + 2-oxoglutarate = (R)-3-hydroxy-2-oxo-4-phosphooxybutanoate + L-glutamate. Its pathway is amino-acid biosynthesis; L-serine biosynthesis; L-serine from 3-phospho-D-glycerate: step 2/3. It functions in the pathway cofactor biosynthesis; pyridoxine 5'-phosphate biosynthesis; pyridoxine 5'-phosphate from D-erythrose 4-phosphate: step 3/5. In terms of biological role, catalyzes the reversible conversion of 3-phosphohydroxypyruvate to phosphoserine and of 3-hydroxy-2-oxo-4-phosphonooxybutanoate to phosphohydroxythreonine. In Aliivibrio fischeri (strain ATCC 700601 / ES114) (Vibrio fischeri), this protein is Phosphoserine aminotransferase.